Consider the following 957-residue polypeptide: Glycine dehydrogenase (decarboxylating) (957 aa).

N6-(pyridoxal phosphate)lysine is present on lysine 708.

This sequence belongs to the GcvP family. The glycine cleavage system is composed of four proteins: P, T, L and H. Pyridoxal 5'-phosphate is required as a cofactor.

The enzyme catalyses N(6)-[(R)-lipoyl]-L-lysyl-[glycine-cleavage complex H protein] + glycine + H(+) = N(6)-[(R)-S(8)-aminomethyldihydrolipoyl]-L-lysyl-[glycine-cleavage complex H protein] + CO2. The glycine cleavage system catalyzes the degradation of glycine. The P protein binds the alpha-amino group of glycine through its pyridoxal phosphate cofactor; CO(2) is released and the remaining methylamine moiety is then transferred to the lipoamide cofactor of the H protein. This is Glycine dehydrogenase (decarboxylating) from Escherichia coli O1:K1 / APEC.